A 257-amino-acid polypeptide reads, in one-letter code: Acyl-[acyl-carrier-protein]--UDP-N-acetylglucosamine O-acyltransferase (257 aa).

It belongs to the transferase hexapeptide repeat family. LpxA subfamily. In terms of assembly, homotrimer.

It is found in the cytoplasm. It catalyses the reaction a (3R)-hydroxyacyl-[ACP] + UDP-N-acetyl-alpha-D-glucosamine = a UDP-3-O-[(3R)-3-hydroxyacyl]-N-acetyl-alpha-D-glucosamine + holo-[ACP]. Its pathway is glycolipid biosynthesis; lipid IV(A) biosynthesis; lipid IV(A) from (3R)-3-hydroxytetradecanoyl-[acyl-carrier-protein] and UDP-N-acetyl-alpha-D-glucosamine: step 1/6. Involved in the biosynthesis of lipid A, a phosphorylated glycolipid that anchors the lipopolysaccharide to the outer membrane of the cell. The chain is Acyl-[acyl-carrier-protein]--UDP-N-acetylglucosamine O-acyltransferase from Anaeromyxobacter dehalogenans (strain 2CP-1 / ATCC BAA-258).